A 362-amino-acid chain; its full sequence is Probable endopolygalacturonase B (362 aa).

The N-terminal stretch at 1–20 (MHFLQNAVVAATMGAALAAA) is a signal peptide. Positions 21-25 (APLEK) are excised as a propeptide. Cys28 and Cys43 form a disulfide bridge. PbH1 repeat units lie at residues 155–184 (ADHL…DIGQ), 185–206 (STYI…AINS), 207–227 (GEHI…SIGS), 236–257 (VNDV…RIKT), 265–287 (VENV…VVEQ), and 299–344 (TNGV…DVTG). Asp199 acts as the Proton donor in catalysis. An intrachain disulfide couples Cys201 to Cys217. His221 is a catalytic residue. Cys327 and Cys332 are oxidised to a cystine. Asn334 carries an N-linked (GlcNAc...) asparagine glycan. Cys351 and Cys360 form a disulfide bridge.

It belongs to the glycosyl hydrolase 28 family.

It localises to the secreted. The enzyme catalyses (1,4-alpha-D-galacturonosyl)n+m + H2O = (1,4-alpha-D-galacturonosyl)n + (1,4-alpha-D-galacturonosyl)m.. Involved in maceration and soft-rotting of plant tissue. Hydrolyzes the 1,4-alpha glycosidic bonds of de-esterified pectate in the smooth region of the plant cell wall. This chain is Probable endopolygalacturonase B (pgaB), found in Aspergillus niger (strain ATCC MYA-4892 / CBS 513.88 / FGSC A1513).